The primary structure comprises 66 residues: Clusterin (66 aa).

It belongs to the clusterin family. In terms of assembly, antiparallel disulfide-linked heterodimer of an alpha chain and a beta chain. Self-associates and forms higher oligomers. Interacts with a broad range of misfolded proteins, including APP, APOC2 and LYZ. Slightly acidic pH promotes interaction with misfolded proteins. Forms high-molecular weight oligomers upon interaction with misfolded proteins. Interacts with APOA1, LRP2, CLUAP1 and PON1. Interacts with the complement membrane attack complex. Interacts (via alpha chain) with XRCC6. Interacts with SYVN1, COMMD1, BTRC, CUL1 and with ubiquitin and SCF (SKP1-CUL1-F-box protein) E3 ubiquitin-protein ligase complexes. Interacts (via alpha chain) with BAX in stressed cells, where BAX undergoes a conformation change leading to association with the mitochondrial membrane. Does not interact with BAX in unstressed cells. Found in a complex with LTF, CLU, EPPIN and SEMG1. Interacts (immaturely glycosylated pre-secreted form) with HSPA5; this interaction promotes CLU stability and facilitates stress-induced CLU retrotranslocation from the secretory pathway to the mitochondria, thereby reducing stress-induced apoptosis by stabilizing mitochondrial membrane integrity. Interacts with BCL2L1; this interaction releases and activates BAX and promotes cell death. Interacts with TGFBR2 and ACVR1. Interacts (secreted form) with STMN3; this interaction may act as an important modulator during neuronal differentiation. Component of a epididymal complex at least composed of soluble form of prion protein PRNP, CLU, BPI, CES5A, MANBA and GLB1. Post-translationally, proteolytically cleaved on its way through the secretory system, probably within the Golgi lumen. Proteolytic cleavage is not necessary for its chaperone activity. All non-secreted forms are not proteolytically cleaved. Chaperone activity of uncleaved forms is dependent on a non-reducing environment. In terms of processing, polyubiquitinated, leading to proteasomal degradation. Under cellular stress, the intracellular level of cleaved form is reduced due to proteasomal degradation. Heavily N-glycosylated. About 30% of the protein mass is comprised of complex N-linked carbohydrate. Endoplasmic reticulum (ER) stress induces changes in glycosylation status and increases level of hypoglycosylated forms. Core carbohydrates are essential for chaperone activity. Non-secreted forms are hypoglycosylated or unglycosylated.

Its subcellular location is the secreted. It localises to the nucleus. The protein resides in the cytoplasm. It is found in the mitochondrion membrane. The protein localises to the cytosol. Its subcellular location is the microsome. It localises to the endoplasmic reticulum. The protein resides in the mitochondrion. It is found in the perinuclear region. The protein localises to the cytoplasmic vesicle. Its subcellular location is the secretory vesicle. It localises to the chromaffin granule. In terms of biological role, functions as extracellular chaperone that prevents aggregation of non native proteins. Prevents stress-induced aggregation of blood plasma proteins. Inhibits formation of amyloid fibrils by APP, APOC2, B2M, CALCA, CSN3, SNCA and aggregation-prone LYZ variants (in vitro). Does not require ATP. Maintains partially unfolded proteins in a state appropriate for subsequent refolding by other chaperones, such as HSPA8/HSC70. Does not refold proteins by itself. Binding to cell surface receptors triggers internalization of the chaperone-client complex and subsequent lysosomal or proteasomal degradation. When secreted, protects cells against apoptosis and against cytolysis by complement: inhibits assembly of the complement membrane attack complex (MAC) by preventing polymerization of C9 pore component of the MAC complex. Intracellular forms interact with ubiquitin and SCF (SKP1-CUL1-F-box protein) E3 ubiquitin-protein ligase complexes and promote the ubiquitination and subsequent proteasomal degradation of target proteins. Promotes proteasomal degradation of COMMD1 and IKBKB. Modulates NF-kappa-B transcriptional activity. Following stress, promotes apoptosis. Inhibits apoptosis when associated with the mitochondrial membrane by interference with BAX-dependent release of cytochrome c into the cytoplasm. Plays a role in the regulation of cell proliferation. An intracellular form suppresses stress-induced apoptosis by stabilizing mitochondrial membrane integrity through interaction with HSPA5. Secreted form does not affect caspase or BAX-mediated intrinsic apoptosis and TNF-induced NF-kappa-B-activity. Secreted form act as an important modulator during neuronal differentiation through interaction with STMN3. Plays a role in the clearance of immune complexes that arise during cell injury. The sequence is that of Clusterin (CLU) from Ovis aries (Sheep).